The chain runs to 111 residues: MDHRDINTNMEALREVLRYKNKVAGHGFLFDDGDLVWREEDDATWRRLCDVVNALISSKRMQRVLYMDLSITKGEGHLLFVDLQGTKNRLHKEPRFRRHLILIEDFLAYPR.

Belongs to the novirhabdovirus NV protein family.

In terms of biological role, plays an essential role for the viral pathogenicity. This chain is Non-virion protein (NV), found in Infectious hematopoietic necrosis virus (strain Oregon69) (IHNV).